The primary structure comprises 483 residues: Triplex capsid protein 1 (483 aa).

An RIP homotypic interaction motif (RHIM) motif is present at residues 24–40; it reads LLGNNRFIQIGNGLHMT.

The protein belongs to the herpesviridae TRX1 protein family. Interacts with TRX2, MCP and capsid vertex component 2/CVC2. Self-assembles into homo-oligomeric amyloid fibrils. Interacts with host ZBP1; this interaction prevents host necroptosis and extrinsic apoptosis. Interacts with host RIPK3.

The protein resides in the virion. It localises to the host nucleus. In terms of biological role, structural component of the T=16 icosahedral capsid. The capsid is composed of pentamers and hexamers of major capsid protein/MCP, which are linked together by heterotrimers called triplexes. These triplexes are formed by a single molecule of triplex protein 1/TRX1 and two copies of triplex protein 2/TRX2. Additionally, TRX1 is required for efficient transport of TRX2 to the nucleus, which is the site of capsid assembly. Also prevents necroptosis and extrinsic apoptosis by sequestering host ZBP1 into large, insoluble supercomplexes and impairing its ability to interact with RIPK3. The protein is Triplex capsid protein 1 of Varicella-zoster virus (strain Dumas) (HHV-3).